The primary structure comprises 96 residues: Large ribosomal subunit protein bL25 (96 aa).

Belongs to the bacterial ribosomal protein bL25 family. Part of the 50S ribosomal subunit; part of the 5S rRNA/L5/L18/L25 subcomplex. Contacts the 5S rRNA. Binds to the 5S rRNA independently of L5 and L18.

Its function is as follows. This is one of the proteins that binds to the 5S RNA in the ribosome where it forms part of the central protuberance. The sequence is that of Large ribosomal subunit protein bL25 from Buchnera aphidicola subsp. Schizaphis graminum (strain Sg).